The primary structure comprises 72 residues: Cytochrome c oxidase subunit 2 (72 aa).

The Mitochondrial intermembrane segment spans residues 1–14 (MAHPSQLGFQDAAS). Residues 15 to 45 (PVMEELLHFHDHALMIVFLISTLVLYIIVAM) form a helical membrane-spanning segment. Residues 46–72 (VSTKLTNKHILDSQEVEIVWTILPAVI) lie on the Mitochondrial matrix side of the membrane.

It belongs to the cytochrome c oxidase subunit 2 family. Component of the cytochrome c oxidase (complex IV, CIV), a multisubunit enzyme composed of 14 subunits. The complex is composed of a catalytic core of 3 subunits MT-CO1, MT-CO2 and MT-CO3, encoded in the mitochondrial DNA, and 11 supernumerary subunits COX4I, COX5A, COX5B, COX6A, COX6B, COX6C, COX7A, COX7B, COX7C, COX8 and NDUFA4, which are encoded in the nuclear genome. The complex exists as a monomer or a dimer and forms supercomplexes (SCs) in the inner mitochondrial membrane with NADH-ubiquinone oxidoreductase (complex I, CI) and ubiquinol-cytochrome c oxidoreductase (cytochrome b-c1 complex, complex III, CIII), resulting in different assemblies (supercomplex SCI(1)III(2)IV(1) and megacomplex MCI(2)III(2)IV(2)). Found in a complex with TMEM177, COA6, COX18, COX20, SCO1 and SCO2. Interacts with TMEM177 in a COX20-dependent manner. Interacts with COX20. Interacts with COX16. Cu cation serves as cofactor.

Its subcellular location is the mitochondrion inner membrane. It carries out the reaction 4 Fe(II)-[cytochrome c] + O2 + 8 H(+)(in) = 4 Fe(III)-[cytochrome c] + 2 H2O + 4 H(+)(out). In terms of biological role, component of the cytochrome c oxidase, the last enzyme in the mitochondrial electron transport chain which drives oxidative phosphorylation. The respiratory chain contains 3 multisubunit complexes succinate dehydrogenase (complex II, CII), ubiquinol-cytochrome c oxidoreductase (cytochrome b-c1 complex, complex III, CIII) and cytochrome c oxidase (complex IV, CIV), that cooperate to transfer electrons derived from NADH and succinate to molecular oxygen, creating an electrochemical gradient over the inner membrane that drives transmembrane transport and the ATP synthase. Cytochrome c oxidase is the component of the respiratory chain that catalyzes the reduction of oxygen to water. Electrons originating from reduced cytochrome c in the intermembrane space (IMS) are transferred via the dinuclear copper A center (CU(A)) of subunit 2 and heme A of subunit 1 to the active site in subunit 1, a binuclear center (BNC) formed by heme A3 and copper B (CU(B)). The BNC reduces molecular oxygen to 2 water molecules using 4 electrons from cytochrome c in the IMS and 4 protons from the mitochondrial matrix. The protein is Cytochrome c oxidase subunit 2 (mt-co2) of Atractosteus spatula (Alligator gar).